The following is a 201-amino-acid chain: 3-isopropylmalate dehydratase small subunit (201 aa).

This sequence belongs to the LeuD family. LeuD type 1 subfamily. In terms of assembly, heterodimer of LeuC and LeuD.

The enzyme catalyses (2R,3S)-3-isopropylmalate = (2S)-2-isopropylmalate. Its pathway is amino-acid biosynthesis; L-leucine biosynthesis; L-leucine from 3-methyl-2-oxobutanoate: step 2/4. In terms of biological role, catalyzes the isomerization between 2-isopropylmalate and 3-isopropylmalate, via the formation of 2-isopropylmaleate. In Paramagnetospirillum magneticum (strain ATCC 700264 / AMB-1) (Magnetospirillum magneticum), this protein is 3-isopropylmalate dehydratase small subunit.